We begin with the raw amino-acid sequence, 198 residues long: Small ribosomal subunit protein uS4 (198 aa).

The tract at residues 26-45 (LKKRPYAPGQHGQRRSKLSN) is disordered. The 64-residue stretch at 91–154 (SRLDNVVYRL…KNLTIVKEAL (64 aa)) folds into the S4 RNA-binding domain.

This sequence belongs to the universal ribosomal protein uS4 family. In terms of assembly, part of the 30S ribosomal subunit. Contacts protein S5. The interaction surface between S4 and S5 is involved in control of translational fidelity.

Functionally, one of the primary rRNA binding proteins, it binds directly to 16S rRNA where it nucleates assembly of the body of the 30S subunit. Its function is as follows. With S5 and S12 plays an important role in translational accuracy. The protein is Small ribosomal subunit protein uS4 of Acholeplasma laidlawii (strain PG-8A).